The following is a 511-amino-acid chain: Sorting nexin MVP1 (511 aa).

The segment at 1 to 36 (MDNYEGSDPWNTSSNAWTKDDDHVVSTTNSEPSLNG) is disordered. The segment covering 25–36 (VSTTNSEPSLNG) has biased composition (polar residues). A PX domain is found at 128–247 (DADIIIIEEI…TFLTVRTDLT (120 aa)). Residues Arg172, Ser174, Lys198, and Arg213 each coordinate a 1,2-diacyl-sn-glycero-3-phospho-(1D-myo-inositol-3-phosphate).

The protein belongs to the sorting nexin family. Homodimer. Forms an autoinhibited tetramer consisting of 2 homodimers that self-interact, wherein the membrane-interacting BAR surfaces are sequestered and the PX lipid-binding sites are occluded. Interacts with VPS1.

Its subcellular location is the cytoplasm. It is found in the endosome membrane. Required for vacuolar protein sorting. Component of the retromer-mediated endosome-to-Golgi retrograde pathway. Required for efficient cargo export from the endosome, promoting VPS1-mediated fission of retromer-coated tubules that bud from the endosome. In Saccharomyces cerevisiae (strain ATCC 204508 / S288c) (Baker's yeast), this protein is Sorting nexin MVP1 (MVP1).